Reading from the N-terminus, the 197-residue chain is MPSRTSANLILASQSAYRQAQLRQLGLPFTTAAAYINEEVLTGENAQQTAVRLAKTKTLKIAKEHANDYIIGCDQTAGLDDIILGKPGTEENAFNQLMQCQARTVTFYSALCVYSPENKQLIQHCTQTKVSFRELNESQIRSYIQRESPLDCAGSFKCEGLGISLFESIQSDDPSALIGLPLIALCTALQHTPFQPI.

The Proton acceptor role is filled by Asp74.

The protein belongs to the Maf family. YceF subfamily. It depends on a divalent metal cation as a cofactor.

It is found in the cytoplasm. It carries out the reaction N(7)-methyl-GTP + H2O = N(7)-methyl-GMP + diphosphate + H(+). Its function is as follows. Nucleoside triphosphate pyrophosphatase that hydrolyzes 7-methyl-GTP (m(7)GTP). May have a dual role in cell division arrest and in preventing the incorporation of modified nucleotides into cellular nucleic acids. The protein is 7-methyl-GTP pyrophosphatase of Saccharophagus degradans (strain 2-40 / ATCC 43961 / DSM 17024).